Reading from the N-terminus, the 92-residue chain is Small ribosomal subunit protein uS19 (92 aa).

It belongs to the universal ribosomal protein uS19 family.

Protein S19 forms a complex with S13 that binds strongly to the 16S ribosomal RNA. The polypeptide is Small ribosomal subunit protein uS19 (Bacillus cereus (strain B4264)).